Reading from the N-terminus, the 193-residue chain is Major structural subunit of bundle-forming pilus (193 aa).

A propeptide spans 1–13 (leader sequence); sequence MVSKIMNKKYEKG. Leu14 bears the N-methylleucine mark. A helical membrane pass occupies residues 14-35; it reads LSLIESAMVLALAATVTAGVMF. The cysteines at positions 129 and 179 are disulfide-linked.

It belongs to the N-Me-Phe pilin family. In terms of assembly, 10 to 100 laterally aligned filaments or bundle-forming pili coalesce into rope-like bundles. These form linkages between the bacteria within the enteropathogenic E.coli (EPEC) microcolonies that are attached to epithelial cells.

Its subcellular location is the fimbrium. The protein localises to the membrane. Major component of type IV bundle-forming pili (BFP) that plays a role in adherence to host cells and virulence. The polypeptide is Major structural subunit of bundle-forming pilus (bfpA) (Escherichia coli O127:H6 (strain E2348/69 / EPEC)).